Consider the following 243-residue polypeptide: Ribonuclease HII (243 aa).

Residues 23–217 (SVIVGVDEVG…LSSECEGAPP (195 aa)) form the RNase H type-2 domain. D29, E30, and D122 together coordinate a divalent metal cation. The tract at residues 223-243 (LSSTGIKTPVDGRGDAVATRD) is disordered. The span at 232–243 (VDGRGDAVATRD) shows a compositional bias: basic and acidic residues.

Belongs to the RNase HII family. The cofactor is Mn(2+). Mg(2+) is required as a cofactor.

The protein resides in the cytoplasm. The catalysed reaction is Endonucleolytic cleavage to 5'-phosphomonoester.. In terms of biological role, endonuclease that specifically degrades the RNA of RNA-DNA hybrids. This chain is Ribonuclease HII, found in Anaplasma marginale (strain St. Maries).